Consider the following 393-residue polypeptide: NAD(P)H-quinone oxidoreductase subunit H, chloroplastic (393 aa).

Belongs to the complex I 49 kDa subunit family. NDH is composed of at least 16 different subunits, 5 of which are encoded in the nucleus.

It localises to the plastid. The protein localises to the chloroplast thylakoid membrane. The enzyme catalyses a plastoquinone + NADH + (n+1) H(+)(in) = a plastoquinol + NAD(+) + n H(+)(out). The catalysed reaction is a plastoquinone + NADPH + (n+1) H(+)(in) = a plastoquinol + NADP(+) + n H(+)(out). Its function is as follows. NDH shuttles electrons from NAD(P)H:plastoquinone, via FMN and iron-sulfur (Fe-S) centers, to quinones in the photosynthetic chain and possibly in a chloroplast respiratory chain. The immediate electron acceptor for the enzyme in this species is believed to be plastoquinone. Couples the redox reaction to proton translocation, and thus conserves the redox energy in a proton gradient. This Solanum bulbocastanum (Wild potato) protein is NAD(P)H-quinone oxidoreductase subunit H, chloroplastic.